Reading from the N-terminus, the 3224-residue chain is E3 SUMO-protein ligase RanBP2 (3224 aa).

T19 is modified (phosphothreonine). S21 is modified (phosphoserine). 7 TPR repeats span residues 26-59, 60-93, 94-128, 165-201, 287-319, 583-616, and 648-681; these read SMKGFYFAKLYYEAKEYDLAKKYICTYINVQERD, PKAHRFLGLLYELEENTDKAVECYRRSVELNPTQ, KDLVLKIAELLCKNDVTDGRAKYWLERAAKLFPGS, VHVNIRLVEVYRSTKRLKDAVAHCHEAERNIALRSSL, GHFYMHAGSLLLKMGQHSSNVQWRALSELAALC, QKTGSGLNSFYDQREYIGRSVHYWKKVLPLLKII, and EDAHITFAILDAVNGNIEDAVTAFESIKSVVSYW. Residues 760–802 form a disordered region; sequence GPLYKNGSLRNADSEIKHSTPSPTRYSLSPSKSYKYSPKTPPR. T779 carries the post-translational modification Phosphothreonine. 3 positions are modified to phosphoserine: S781, S788, and S837. Residues 785-797 are compositionally biased toward low complexity; it reads YSLSPSKSYKYSP. R945 bears the Asymmetric dimethylarginine mark. S948 and S955 each carry phosphoserine. The stretch at 1001–1002 is repeat 1; the sequence is FG. Residues 1001 to 3206 are 22 X 2 AA repeats of F-G; that stretch reads FGKTNFVQPM…DTVKKIESFG (2206 aa). Residue R1016 is modified to Asymmetric dimethylarginine; alternate. The residue at position 1016 (R1016) is an Omega-N-methylarginine; alternate. Phosphothreonine is present on T1098. Repeat unit 2 spans residues 1101 to 1102; the sequence is FG. 3 positions are modified to phosphoserine: S1103, S1107, and S1110. The segment at 1138 to 1174 is disordered; the sequence is GKSVFGTPTLETANKNHETDGGSAHGDDDDDGPHFEP. The stretch at 1142–1143 is repeat 3; the sequence is FG. T1144 bears the Phosphothreonine mark. S1160 and S1249 each carry phosphoserine. Residues 1171-1307 enclose the RanBD1 1 domain; it reads HFEPVVPLPD…FEEAQSILKA (137 aa). Residue K1350 forms a Glycyl lysine isopeptide (Lys-Gly) (interchain with G-Cter in SUMO2) linkage. The RanBP2-type 1 zinc-finger motif lies at 1351–1381; that stretch reads KEGSWWHCNSCSLKNASTAKKCVSCQNLNPS. Phosphothreonine occurs at positions 1396 and 1412. K1414 participates in a covalent cross-link: Glycyl lysine isopeptide (Lys-Gly) (interchain with G-Cter in SUMO2). The RanBP2-type 2 zinc finger occupies 1415–1444; it reads KEGHWDCSICLVRNEPTVSRCIACQNTKSA. Phosphoserine is present on residues S1443, S1450, and S1456. Repeat 4 spans residues 1459 to 1460; sequence FG. A RanBP2-type 3 zinc finger spans residues 1479 to 1508; the sequence is KEGQWDCSACLVQNEGSSTKCAACQNPRKQ. Phosphoserine is present on residues S1509 and S1520. The stretch at 1523 to 1524 is repeat 5; sequence FG. A RanBP2-type 4 zinc finger spans residues 1543-1572; it reads KEGQWDCSSCLVRNEANATRCVACQNPDKP. Residues 1569 to 1595 are disordered; the sequence is PDKPSPSTSVPAPASFKFGTSETSKAP. At S1573 the chain carries Phosphoserine. Over residues 1573–1583 the composition is skewed to low complexity; that stretch reads SPSTSVPAPAS. The stretch at 1586–1587 is repeat 6; it reads FG. Residue K1596 forms a Glycyl lysine isopeptide (Lys-Gly) (interchain with G-Cter in SUMO2) linkage. A Glycyl lysine isopeptide (Lys-Gly) (interchain with G-Cter in SUMO1); alternate cross-link involves residue K1605. A Glycyl lysine isopeptide (Lys-Gly) (interchain with G-Cter in SUMO2); alternate cross-link involves residue K1605. The RanBP2-type 5 zinc finger occupies 1606–1635; sequence KEGQWDCSVCLVRNEASATKCIACQNPGKQ. Residues 1633-1653 show a composition bias toward polar residues; that stretch reads GKQNQTTSAVSTPASSETSKA. The segment at 1633-1657 is disordered; that stretch reads GKQNQTTSAVSTPASSETSKAPKSG. A Glycyl lysine isopeptide (Lys-Gly) (interchain with G-Cter in SUMO2) cross-link involves residue K1655. Residue K1664 forms a Glycyl lysine isopeptide (Lys-Gly) (interchain with G-Cter in SUMO1); alternate linkage. K1664 participates in a covalent cross-link: Glycyl lysine isopeptide (Lys-Gly) (interchain with G-Cter in SUMO2); alternate. The segment at 1665 to 1694 adopts a RanBP2-type 6 zinc-finger fold; sequence KEGQWDCSVCLVRNEASATKCIACQNPGKQ. The segment covering 1692-1712 has biased composition (polar residues); that stretch reads GKQNQTTSAVSTPASSETSKA. The tract at residues 1692 to 1716 is disordered; sequence GKQNQTTSAVSTPASSETSKAPKSG. Residue K1714 forms a Glycyl lysine isopeptide (Lys-Gly) (interchain with G-Cter in SUMO2) linkage. K1723 is covalently cross-linked (Glycyl lysine isopeptide (Lys-Gly) (interchain with G-Cter in SUMO1); alternate). A Glycyl lysine isopeptide (Lys-Gly) (interchain with G-Cter in SUMO2); alternate cross-link involves residue K1723. 2 consecutive RanBP2-type zinc fingers follow at residues 1724-1753 and 1781-1810; these read KEGQWDCSVCLVRNEASATKCIACQCPSKQ and RKGQWDCSVCCVQNESSSLKCVACDASKPT. Phosphoserine is present on residues S1833 and S1835. Repeat copies occupy residues 1852–1853 and 1861–1862. Phosphoserine occurs at positions 1869 and 1871. The stretch at 1900-1901 is repeat 9; sequence FG. Residues 1903–1928 form a disordered region; it reads SEPGNQEKKSEKPLENGTGFQAQDIS. Basic and acidic residues predominate over residues 1907–1916; it reads NQEKKSEKPL. Repeat copies occupy residues 1938–1939 and 1961–1962. N6-acetyllysine is present on K1977. T2005 is modified (phosphothreonine). Residue S2008 is modified to Phosphoserine. The 137-residue stretch at 2012–2148 folds into the RanBD1 2 domain; the sequence is HFEPVVQMPE…FEECQRLLLD (137 aa). A Glycyl lysine isopeptide (Lys-Gly) (interchain with G-Cter in SUMO2) cross-link involves residue K2022. The segment at 2147–2287 is interaction with BICD2; the sequence is LDIPLQTPHK…SKSPAKLNQS (141 aa). Position 2153 is a phosphothreonine (T2153). The tract at residues 2188–2224 is disordered; sequence QTKVTEEENKGSGTGAAGASDTTIKPNPENTGPTLEW. The span at 2211-2220 shows a compositional bias: polar residues; it reads IKPNPENTGP. S2246 and S2251 each carry phosphoserine. The stretch at 2260 to 2261 is repeat 12; it reads FG. A phosphoserine mark is found at S2270, S2280, and S2290. A compositionally biased stretch (low complexity) spans 2273 to 2284; the sequence is SALSPSKSPAKL. The segment at 2273–2307 is disordered; it reads SALSPSKSPAKLNQSGTSVGTDEESDVTQEEERDG. Phosphothreonine is present on T2293. Residues 2293–2305 show a composition bias toward acidic residues; it reads TDEESDVTQEEER. S2297 carries the post-translational modification Phosphoserine. One can recognise a RanBD1 3 domain in the interval 2309–2445; that stretch reads YFEPVVPLPD…FDEAKTAQEK (137 aa). S2462, S2493, and S2510 each carry phosphoserine. Residues 2486-2509 are disordered; it reads DDVADATSEVEVSSTSETTPKAVV. A compositionally biased stretch (low complexity) spans 2492-2504; it reads TSEVEVSSTSETT. Copy 13 of the repeat occupies 2516-2517; it reads FG. A Glycyl lysine isopeptide (Lys-Gly) (interchain with G-Cter in SUMO2) cross-link involves residue K2522. S2526 carries the post-translational modification Phosphoserine. Tandem repeats lie at residues 2535-2536 and 2545-2546. The segment covering 2556–2569 has biased composition (polar residues); that stretch reads NNSETSSVAQSGSE. The segment at 2556–2584 is disordered; that stretch reads NNSETSSVAQSGSESKVEPKKCELSKNSD. Over residues 2570-2584 the composition is skewed to basic and acidic residues; sequence SKVEPKKCELSKNSD. A Glycyl lysine isopeptide (Lys-Gly) (interchain with G-Cter in SUMO) cross-link involves residue K2592. K2594 participates in a covalent cross-link: Glycyl lysine isopeptide (Lys-Gly) (interchain with G-Cter in SUMO1); alternate. K2594 participates in a covalent cross-link: Glycyl lysine isopeptide (Lys-Gly) (interchain with G-Cter in SUMO2); alternate. Residue K2612 forms a Glycyl lysine isopeptide (Lys-Gly) (interchain with G-Cter in SUMO2) linkage. Position 2613 is a phosphothreonine (T2613). The interval 2631-2635 is interaction with sumoylated RANGAP1; that stretch reads DVLIV. 2 tandem repeats follow at residues 2633 to 2685 and 2711 to 2761. The tract at residues 2633-2685 is interaction with UBE2I; that stretch reads LIVYELTPTAEQKALATKLKLPPTFFCYKNRPDYVSEEEEDDEDFETAVKKLN. Positions 2633-2710 are required for E3 SUMO-ligase activity; it reads LIVYELTPTA…ENTADNEKEC (78 aa). The tract at residues 2633–2761 is 2 X 50 AA approximate repeats; sequence LIVYELTPTA…DFQSELQKVQ (129 aa). Y2666 carries the phosphotyrosine modification. 2 positions are modified to phosphoserine: S2668 and S2741. The segment at 2686–2761 is interaction with SUMO1; it reads GKLYLDGSEK…DFQSELQKVQ (76 aa). Position 2743 is a phosphothreonine (T2743). K2792 participates in a covalent cross-link: Glycyl lysine isopeptide (Lys-Gly) (interchain with G-Cter in SUMO2). The interval 2793-2818 is disordered; sequence SEEPDSITKSISSPSVSSETMDKPVD. Low complexity predominate over residues 2799–2810; that stretch reads ITKSISSPSVSS. A Phosphoserine modification is found at S2805. K2815 participates in a covalent cross-link: Glycyl lysine isopeptide (Lys-Gly) (interchain with G-Cter in SUMO2). A run of 4 repeats spans residues 2840–2841, 2842–2843, 2863–2864, and 2880–2881. Residue S2900 is modified to Phosphoserine. In terms of domain architecture, RanBD1 4 spans 2911-3046; that stretch reads HFEPIVSLPE…FEECQQNLMK (136 aa). The region spanning 3067–3223 is the PPIase cyclophilin-type domain; sequence FFDVCADGEP…RRITITECGQ (157 aa). 3 repeat units span residues 3106–3107, 3189–3190, and 3205–3206. Phosphoserine is present on S3207.

It belongs to the RanBP2 E3 ligase family. In terms of assembly, part of the nuclear pore complex. Forms a complex with NXT1, NXF1 and RANGAP1. Forms a tight complex with RANBP1 and UBE2I. Interacts with SUMO1 but not SUMO2. Interacts with PRKN. Interacts with sumoylated RANGAP1. Interacts with CDCA8. Interacts with PML (isoform PML-4). Interacts with BICD2. Interacts with MCM3AP isoform GANP. Interacts with COX11. Interacts with synaptic plasticity regulator PANTS. As to quaternary structure, (Microbial infection) Interacts with HIV-1 Vpu protein; this interaction allows Vpu to down-regulate BLM sumoylation. Post-translationally, polyubiquitinated by PRKN, which leads to proteasomal degradation. The inner channel of the NPC has a different redox environment from the cytoplasm and allows the formation of interchain disulfide bonds between some nucleoporins, the significant increase of these linkages upon oxidative stress reduces the permeability of the NPC.

The protein localises to the nucleus. It is found in the nucleus membrane. The protein resides in the nuclear pore complex. It localises to the nucleus envelope. It participates in protein modification; protein sumoylation. Functionally, E3 SUMO-protein ligase which facilitates SUMO1 and SUMO2 conjugation by UBE2I. Involved in transport factor (Ran-GTP, karyopherin)-mediated protein import via the F-G repeat-containing domain which acts as a docking site for substrates. Binds single-stranded RNA (in vitro). May bind DNA. Component of the nuclear export pathway. Specific docking site for the nuclear export factor exportin-1. Inhibits EIF4E-dependent mRNA export. Sumoylates PML at 'Lys-490' which is essential for the proper assembly of PML-NB. Recruits BICD2 to the nuclear envelope and cytoplasmic stacks of nuclear pore complex known as annulate lamellae during G2 phase of cell cycle. Probable inactive PPIase with no peptidyl-prolyl cis-trans isomerase activity. The sequence is that of E3 SUMO-protein ligase RanBP2 (RANBP2) from Homo sapiens (Human).